A 424-amino-acid chain; its full sequence is 5-methylthioadenosine/S-adenosylhomocysteine deaminase (424 aa).

Residues H60 and H62 each contribute to the Zn(2+) site. Residues E89 and H181 each coordinate substrate. H208 contacts Zn(2+). Substrate-binding residues include E211 and D296. Zn(2+) is bound at residue D296.

The protein belongs to the metallo-dependent hydrolases superfamily. MTA/SAH deaminase family. The cofactor is Zn(2+).

It catalyses the reaction S-adenosyl-L-homocysteine + H2O + H(+) = S-inosyl-L-homocysteine + NH4(+). The enzyme catalyses S-methyl-5'-thioadenosine + H2O + H(+) = S-methyl-5'-thioinosine + NH4(+). Its function is as follows. Catalyzes the deamination of 5-methylthioadenosine and S-adenosyl-L-homocysteine into 5-methylthioinosine and S-inosyl-L-homocysteine, respectively. Is also able to deaminate adenosine. The polypeptide is 5-methylthioadenosine/S-adenosylhomocysteine deaminase (Thermococcus kodakarensis (strain ATCC BAA-918 / JCM 12380 / KOD1) (Pyrococcus kodakaraensis (strain KOD1))).